A 389-amino-acid polypeptide reads, in one-letter code: Succinate--CoA ligase [ADP-forming] subunit beta (389 aa).

The region spanning 9-244 (KQLFADYGLP…ETQEDPREVE (236 aa)) is the ATP-grasp domain. Residues Lys46, 53 to 55 (GRG), Glu99, Gly102, and Glu107 contribute to the ATP site. Residues Asn199 and Asp213 each contribute to the Mg(2+) site. Residues Asn264 and 321–323 (GIV) each bind substrate.

The protein belongs to the succinate/malate CoA ligase beta subunit family. Heterotetramer of two alpha and two beta subunits. Requires Mg(2+) as cofactor.

It carries out the reaction succinate + ATP + CoA = succinyl-CoA + ADP + phosphate. It catalyses the reaction GTP + succinate + CoA = succinyl-CoA + GDP + phosphate. It functions in the pathway carbohydrate metabolism; tricarboxylic acid cycle; succinate from succinyl-CoA (ligase route): step 1/1. Succinyl-CoA synthetase functions in the citric acid cycle (TCA), coupling the hydrolysis of succinyl-CoA to the synthesis of either ATP or GTP and thus represents the only step of substrate-level phosphorylation in the TCA. The beta subunit provides nucleotide specificity of the enzyme and binds the substrate succinate, while the binding sites for coenzyme A and phosphate are found in the alpha subunit. The polypeptide is Succinate--CoA ligase [ADP-forming] subunit beta (Tolumonas auensis (strain DSM 9187 / NBRC 110442 / TA 4)).